Reading from the N-terminus, the 463-residue chain is Vacuolar cation/proton exchanger 1 (463 aa).

Ala-2 is subject to N-acetylalanine. Topologically, residues 2–68 (AGIVTEPWSV…LKDFLSNLQE (67 aa)) are cytoplasmic. The interval 25–33 (SRELRLGRT) is required for autoinhibitory regulation. The required for interaction with autoinhibitory region stretch occupies residues 56–62 (YKGLKDF). Residues 69 to 89 (VILGTKLAILFPAIPAAIICT) form a helical membrane-spanning segment. The interval 87-95 (ICTYCGVSQ) is required for Ca(2+)/H(+) exchange activity. The Extracellular portion of the chain corresponds to 90 to 96 (YCGVSQP). A helical membrane pass occupies residues 97 to 116 (WIFGLSLLGLTPLAERVSFL). The Cytoplasmic portion of the chain corresponds to 117–127 (TEQLAFYTGPT). A helical transmembrane segment spans residues 128-148 (LGGLLNATCGNATELIIAILA). Residues 137 to 172 (GNATELIIAILALTNNKVAVVKYSLLGSILSNLLLV) form a cation selection region. Over 149 to 161 (LTNNKVAVVKYSL) the chain is Extracellular. The chain crosses the membrane as a helical span at residues 162–182 (LGSILSNLLLVLGTSLFCGGI). The Cytoplasmic segment spans residues 183 to 197 (ANIRREQRFDRKQAD). Residues 198–218 (VNFFLLLLGFLCHLLPLLVGY) form a helical membrane-spanning segment. The Extracellular segment spans residues 219 to 238 (LKNGEASAAVLSDMQLSISR). The chain crosses the membrane as a helical span at residues 239–259 (GFSIVMLISYIAYLVFQLWTH). Topologically, residues 260–281 (RQLFDAQEQEDEYDDDVEQETA) are cytoplasmic. Residues 282–302 (VISFWSGFAWLVGMTLVIALL) form a helical membrane-spanning segment. At 303-325 (SEYVVATIEEASDKWNLSVSFIS) the chain is on the extracellular side. Asn-318 carries N-linked (GlcNAc...) asparagine glycosylation. The helical transmembrane segment at 326–346 (IILLPIVGNAAEHAGAVIFAF) threads the bilayer. The tract at residues 333–368 (GNAAEHAGAVIFAFKNKLDISLGVALGSATQIGLFV) is cation selection. Topologically, residues 347–360 (KNKLDISLGVALGS) are cytoplasmic. The helical transmembrane segment at 361–381 (ATQIGLFVVPLTIIVAWILGI) threads the bilayer. Residues 382–384 (NMD) are Extracellular-facing. The helical transmembrane segment at 385 to 405 (LNFGPLETGCLAVSIIITAFT) threads the bilayer. Residues 406–411 (LQDGSS) lie on the Cytoplasmic side of the membrane. The chain crosses the membrane as a helical span at residues 412 to 432 (HYMKGLVLLLCYFIIAICFFV). Residues 433–463 (DKLPQKQNAIHLGHQAMNNVVTATGGGVFSS) lie on the Extracellular side of the membrane.

This sequence belongs to the Ca(2+):cation antiporter (CaCA) (TC 2.A.19) family. Cation/proton exchanger (CAX) subfamily. In terms of assembly, interacts with GRXS14 and CXIP4. In terms of tissue distribution, expressed at low levels in leaves, stems and flowers.

The protein resides in the vacuole membrane. Its activity is regulated as follows. Activated by monothiol glutaredoxin GRXS14 and CXIP4. Inhibited by excess of Ca(2+) and Cd(2+), Na(+) and K(+), but not Mn(2+). Its function is as follows. Vacuolar cation/proton exchanger (CAX). Translocates Ca(2+) and other metal ions into vacuoles using the proton gradient formed by H(+)-ATPase and H(+)-pyrophosphatase. Involved in ion homeostasis in association with CAX3. May play a role in cold-acclimation response. This is Vacuolar cation/proton exchanger 1 (CAX1) from Arabidopsis thaliana (Mouse-ear cress).